The sequence spans 357 residues: Protein RecA (357 aa).

67-74 (GPESSGKT) contacts ATP. Positions 332–357 (PSAMSSSSSDDENSEGNVDFETGEVF) are disordered.

This sequence belongs to the RecA family.

The protein localises to the cytoplasm. In terms of biological role, can catalyze the hydrolysis of ATP in the presence of single-stranded DNA, the ATP-dependent uptake of single-stranded DNA by duplex DNA, and the ATP-dependent hybridization of homologous single-stranded DNAs. It interacts with LexA causing its activation and leading to its autocatalytic cleavage. This chain is Protein RecA, found in Shewanella sp. (strain ANA-3).